The sequence spans 2179 residues: Genome polyprotein (2179 aa).

The tract at residues 1 to 20 is disordered; that stretch reads MGAQVSTQKSGSHENQNILT. G2 carries N-myristoyl glycine; by host lipidation. Residues 2 to 1491 are Cytoplasmic-facing; it reads GAQVSTQKSG…AMNQASMIIN (1490 aa). Residues 564–584 form an amphipathic alpha-helix region; the sequence is ALTEGLGDELEEVIVEKTKQT. Catalysis depends on for protease 2A activity residues H876 and D894. Residues C911 and C913 each contribute to the Zn(2+) site. C965 (for protease 2A activity) is an active-site residue. Zn(2+) contacts are provided by C971 and H973. The membrane-binding stretch occupies residues 1101–1173; that stretch reads NDGWFRKFND…HISNPTQEKR (73 aa). Positions 1101–1239 are oligomerization; the sequence is NDGWFRKFND…TPGSGKSLTT (139 aa). The tract at residues 1122–1126 is RNA-binding; sequence ANKIS. Residues 1205 to 1361 enclose the SF3 helicase domain; that stretch reads KNKMVNYMQF…TTYTKNGKLN (157 aa). Residues C1369, C1372, C1381, and C1386 each coordinate Zn(2+). The segment at 1369 to 1386 adopts a C4-type zinc-finger fold; that stretch reads CKDCHQPSNFKKCCPLVC. Positions 1413-1420 are RNA-binding; that stretch reads DFKSKMQI. The interval 1424-1429 is oligomerization; sequence LETLFQ. Residues 1492–1507 lie within the membrane without spanning it; it reads TILMFVSTLGIVYVIY. The Cytoplasmic portion of the chain corresponds to 1508–2179; it reads KLFAQTQGPY…VLRRRWLDLF (672 aa). Y1517 is modified (O-(5'-phospho-RNA)-tyrosine). The Peptidase C3 domain occupies 1538 to 1715; the sequence is GPNTEFALSL…FSAQLKKQYF (178 aa). Residues H1577, E1608, and C1683 each act as for protease 3C activity in the active site. The RdRp catalytic domain occupies 1946 to 2060; it reads GHLMAFDYSN…SYPYELDPQV (115 aa). Residues D1952 and D2046 each coordinate Mg(2+).

Belongs to the picornaviruses polyprotein family. Interacts with capsid protein VP1 and capsid protein VP3 to form heterotrimeric protomers. In terms of assembly, interacts with capsid protein VP0, and capsid protein VP3 to form heterotrimeric protomers. Five protomers subsequently associate to form pentamers which serve as building blocks for the capsid. Interacts with capsid protein VP2, capsid protein VP3 and capsid protein VP4 following cleavage of capsid protein VP0. Interacts with host ICAM1. As to quaternary structure, interacts with capsid protein VP1 and capsid protein VP3 in the mature capsid. Interacts with capsid protein VP0 and capsid protein VP1 to form heterotrimeric protomers. Five protomers subsequently associate to form pentamers which serve as building blocks for the capsid. Interacts with capsid protein VP4 in the mature capsid. Interacts with protein 2C; this interaction may be important for virion morphogenesis. In terms of assembly, interacts with capsid protein VP1 and capsid protein VP3. As to quaternary structure, homodimer. Homohexamer; forms a hexameric ring structure with 6-fold symmetry characteristic of AAA+ ATPases. Interacts (via N-terminus) with host RTN3 (via reticulon domain); this interaction is important for viral replication. Interacts with capsid protein VP3; this interaction may be important for virion morphogenesis. In terms of assembly, interacts with protein 3CD. As to quaternary structure, homodimer. Interacts with host GBF1. Interacts (via GOLD domain) with host ACBD3 (via GOLD domain); this interaction allows the formation of a viral protein 3A/ACBD3 heterotetramer with a 2:2 stoichiometry, which will stimulate the recruitment of host PI4KB in order to synthesize PI4P at the viral RNA replication sites. Interacts with RNA-directed RNA polymerase. In terms of assembly, interacts with protein 3AB and with RNA-directed RNA polymerase. As to quaternary structure, interacts with Viral protein genome-linked and with protein 3CD. Mg(2+) serves as cofactor. Post-translationally, specific enzymatic cleavages in vivo by the viral proteases yield processing intermediates and the mature proteins. Myristoylation is required for the formation of pentamers during virus assembly. Further assembly of 12 pentamers and a molecule of genomic RNA generates the provirion. In terms of processing, during virion maturation, immature virions are rendered infectious following cleavage of VP0 into VP4 and VP2. This maturation seems to be an autocatalytic event triggered by the presence of RNA in the capsid and it is followed by a conformational change infectious virion. Post-translationally, myristoylation is required during RNA encapsidation and formation of the mature virus particle. VPg is uridylylated by the polymerase into VPg-pUpU. This acts as a nucleotide-peptide primer for the genomic RNA replication.

It is found in the virion. It localises to the host cytoplasm. Its subcellular location is the host cytoplasmic vesicle membrane. The protein resides in the host nucleus. The enzyme catalyses a ribonucleoside 5'-triphosphate + H2O = a ribonucleoside 5'-diphosphate + phosphate + H(+). It carries out the reaction Selective cleavage of Tyr-|-Gly bond in the picornavirus polyprotein.. The catalysed reaction is RNA(n) + a ribonucleoside 5'-triphosphate = RNA(n+1) + diphosphate. It catalyses the reaction Selective cleavage of Gln-|-Gly bond in the poliovirus polyprotein. In other picornavirus reactions Glu may be substituted for Gln, and Ser or Thr for Gly.. Replication or transcription is subject to high level of random mutations by the nucleotide analog ribavirin. Forms an icosahedral capsid of pseudo T=3 symmetry with capsid proteins VP2 and VP3. The capsid is 300 Angstroms in diameter, composed of 60 copies of each capsid protein and enclosing the viral positive strand RNA genome. Capsid protein VP1 mainly forms the vertices of the capsid. Capsid protein VP1 interacts with host ICAM1 to provide virion attachment to target host cells. This attachment induces virion internalization. Tyrosine kinases are probably involved in the entry process. After binding to its receptor, the capsid undergoes conformational changes. Capsid protein VP1 N-terminus (that contains an amphipathic alpha-helix) and capsid protein VP4 are externalized. Together, they shape a pore in the host membrane through which viral genome is translocated to host cell cytoplasm. After genome has been released, the channel shrinks. In terms of biological role, forms an icosahedral capsid of pseudo T=3 symmetry with capsid proteins VP2 and VP3. The capsid is 300 Angstroms in diameter, composed of 60 copies of each capsid protein and enclosing the viral positive strand RNA genome. Functionally, lies on the inner surface of the capsid shell. After binding to the host receptor, the capsid undergoes conformational changes. Capsid protein VP4 is released, Capsid protein VP1 N-terminus is externalized, and together, they shape a pore in the host membrane through which the viral genome is translocated into the host cell cytoplasm. Its function is as follows. Component of immature procapsids, which is cleaved into capsid proteins VP4 and VP2 after maturation. Allows the capsid to remain inactive before the maturation step. Cysteine protease that cleaves viral polyprotein and specific host proteins. It is responsible for the autocatalytic cleavage between the P1 and P2 regions, which is the first cleavage occurring in the polyprotein. Also cleaves the host translation initiation factor EIF4G1, in order to shut down the capped cellular mRNA translation. Inhibits the host nucleus-cytoplasm protein and RNA trafficking by cleaving host members of the nuclear pores including NUP62 and NUP153. Counteracts stress granule formation probably by antagonizing its assembly or promoting its dissassembly. In terms of biological role, plays an essential role in the virus replication cycle by acting as a viroporin. Creates a pore in the host endoplasmic reticulum and as a consequence releases Ca2+ in the cytoplasm of infected cell. In turn, high levels of cytoplasmic calcium may trigger membrane trafficking and transport of viral ER-associated proteins to viroplasms, sites of viral genome replication. Functionally, induces and associates with structural rearrangements of intracellular membranes. Displays RNA-binding, nucleotide binding and NTPase activities. May play a role in virion morphogenesis and viral RNA encapsidation by interacting with the capsid protein VP3. Its function is as follows. Localizes the viral replication complex to the surface of membranous vesicles. Together with protein 3CD binds the Cis-Active RNA Element (CRE) which is involved in RNA synthesis initiation. Acts as a cofactor to stimulate the activity of 3D polymerase, maybe through a nucleid acid chaperone activity. Localizes the viral replication complex to the surface of membranous vesicles. It inhibits host cell endoplasmic reticulum-to-Golgi apparatus transport and causes the disassembly of the Golgi complex, possibly through GBF1 interaction. This would result in depletion of MHC, trail receptors and IFN receptors at the host cell surface. Plays an essential role in viral RNA replication by recruiting ACBD3 and PI4KB at the viral replication sites, thereby allowing the formation of the rearranged membranous structures where viral replication takes place. In terms of biological role, acts as a primer for viral RNA replication and remains covalently bound to viral genomic RNA. VPg is uridylylated prior to priming replication into VPg-pUpU. The oriI viral genomic sequence may act as a template for this. The VPg-pUpU is then used as primer on the genomic RNA poly(A) by the RNA-dependent RNA polymerase to replicate the viral genome. During genome replication, the VPg-RNA linkage is removed by the host TDP2, thereby accelerating replication. During the late stage of the replication cycle, host TDP2 is excluded from sites of viral RNA synthesis and encapsidation, allowing for the generation of progeny virions. Functionally, involved in the viral replication complex and viral polypeptide maturation. It exhibits protease activity with a specificity and catalytic efficiency that is different from protease 3C. Protein 3CD lacks polymerase activity. Protein 3CD binds to the 5'UTR of the viral genome. Its function is as follows. Major viral protease that mediates proteolytic processing of the polyprotein. Cleaves host EIF5B, contributing to host translation shutoff. Cleaves also host PABPC1, contributing to host translation shutoff. Cleaves host NLRP1, triggers host N-glycine-mediated degradation of the autoinhibitory NLRP1 N-terminal fragment. Replicates the viral genomic RNA on the surface of intracellular membranes. May form linear arrays of subunits that propagate along a strong head-to-tail interaction called interface-I. Covalently attaches UMP to a tyrosine of VPg, which is used to prime RNA synthesis. The positive stranded RNA genome is first replicated at virus induced membranous vesicles, creating a dsRNA genomic replication form. This dsRNA is then used as template to synthesize positive stranded RNA genomes. ss(+)RNA genomes are either translated, replicated or encapsidated. The chain is Genome polyprotein from Homo sapiens (Human).